Consider the following 377-residue polypeptide: MRDPAPSDTQKKRVIVGMSGGVDSSVSALLLMEQGYQVEGLFMKNWEEDDGTEYCTAMDDLADAQAVCDKIGIKLHTANFAAEYWDNVFEHFLAEYKAGRTPNPDILCNREIKFKAFLDYAMMLGADLIATGHYVRRRDIDGRTELLKGLDPNKDQSYFLHAVGGEQIAKTLFPVGELEKPEVRAIAEKHDLATAKKKDSTGICFIGERRFSDFLKQYLPAQPGEIKTTEGEVIGRHHGLMYHTIGQRQGLGIGGLKDAGEEPWYVLIKDLEHNELIVGQGNDHPWLFSRALLASDIYWVNPIDLSLPRRLTAKVRYRQSDQPCTLEKTTNGYRATFDDPQRAVTPGQSVVFYDGEICLGGGVIEVAEPWSSKDARP.

ATP-binding positions include Gly-17–Ser-24 and Met-43. An interaction with target base in tRNA region spans residues Asn-103–Asp-105. Cys-108 acts as the Nucleophile in catalysis. Cys-108 and Cys-204 are disulfide-bonded. Residue Gly-132 coordinates ATP. Residues Lys-154 to Gln-156 form an interaction with tRNA region. Catalysis depends on Cys-204, which acts as the Cysteine persulfide intermediate. The tract at residues Arg-316–Tyr-317 is interaction with tRNA.

It belongs to the MnmA/TRMU family.

It localises to the cytoplasm. It catalyses the reaction S-sulfanyl-L-cysteinyl-[protein] + uridine(34) in tRNA + AH2 + ATP = 2-thiouridine(34) in tRNA + L-cysteinyl-[protein] + A + AMP + diphosphate + H(+). In terms of biological role, catalyzes the 2-thiolation of uridine at the wobble position (U34) of tRNA, leading to the formation of s(2)U34. This Pseudomonas fluorescens (strain ATCC BAA-477 / NRRL B-23932 / Pf-5) protein is tRNA-specific 2-thiouridylase MnmA.